A 107-amino-acid chain; its full sequence is Monogrin 2 (107 aa).

The signal sequence occupies residues 1–20; sequence MEGKVLLCFALLLPFTVAQA. Disulfide bonds link cysteine 28–cysteine 82, cysteine 36–cysteine 62, and cysteine 55–cysteine 78. A BPTI/Kunitz inhibitor domain is found at 29 to 82; it reads GYLMMQRCRGDTTETKAWGFNYEEKKCQKETVICGTGGAPRNAFETKKDCDALC. The Cell attachment site signature appears at 37–39; that stretch reads RGD.

In terms of processing, the N-terminus is blocked. As to expression, expressed in salivary glands.

The protein resides in the cytoplasmic vesicle. It is found in the secretory vesicle. The protein localises to the secreted. In terms of biological role, tick salivary platelet aggregation inhibitor that plays an important part in the anti-hemostatic strategy of ticks. Inhibits platelet aggregation induced by ADP (IC(50)~150 nM), collagen, and platelet activating factor (PAF). Acts by binding to platelet membrane glycoprotein IIb-IIIa (ITGA2B/ITGB3) in a metal ion dependent manner. Does not inhibit aggregation induced by ristocecin, an agonist that aggregates platelets independently from the glycoprotein IIb-IIIa (ITGA2B/ITGB3). In contrast to other tick platelet aggregation inhibitors, this protein does not protect ITGA2B/ITGB3 from dissociation under SDS condition, suggesting it may dissocate much faster than its orthologs. This Argas monolakensis (Mono lake bird tick) protein is Monogrin 2.